The primary structure comprises 344 residues: Uroporphyrinogen decarboxylase (344 aa).

Substrate-binding positions include 29 to 33 (RQAGR), Asp-79, Tyr-153, Ser-208, and His-324.

The protein belongs to the uroporphyrinogen decarboxylase family. As to quaternary structure, homodimer.

Its subcellular location is the cytoplasm. It carries out the reaction uroporphyrinogen III + 4 H(+) = coproporphyrinogen III + 4 CO2. It functions in the pathway porphyrin-containing compound metabolism; protoporphyrin-IX biosynthesis; coproporphyrinogen-III from 5-aminolevulinate: step 4/4. Catalyzes the decarboxylation of four acetate groups of uroporphyrinogen-III to yield coproporphyrinogen-III. This chain is Uroporphyrinogen decarboxylase, found in Rhizorhabdus wittichii (strain DSM 6014 / CCUG 31198 / JCM 15750 / NBRC 105917 / EY 4224 / RW1) (Sphingomonas wittichii).